The primary structure comprises 215 residues: NAD(P)H-quinone oxidoreductase subunit I (215 aa).

4Fe-4S ferredoxin-type domains are found at residues Gly-55–Val-84 and Arg-95–Glu-124. Cys-64, Cys-67, Cys-70, Cys-74, Cys-104, Cys-107, Cys-110, and Cys-114 together coordinate [4Fe-4S] cluster. Positions Ala-166–Ala-215 are disordered. Over residues Met-169–Arg-180 the composition is skewed to basic and acidic residues. Residues Glu-203–Ala-215 show a composition bias toward polar residues.

The protein belongs to the complex I 23 kDa subunit family. As to quaternary structure, NDH-1 is composed of at least 11 different subunits. Requires [4Fe-4S] cluster as cofactor.

The protein localises to the cellular thylakoid membrane. It catalyses the reaction a plastoquinone + NADH + (n+1) H(+)(in) = a plastoquinol + NAD(+) + n H(+)(out). It carries out the reaction a plastoquinone + NADPH + (n+1) H(+)(in) = a plastoquinol + NADP(+) + n H(+)(out). Its function is as follows. NDH-1 shuttles electrons from an unknown electron donor, via FMN and iron-sulfur (Fe-S) centers, to quinones in the respiratory and/or the photosynthetic chain. The immediate electron acceptor for the enzyme in this species is believed to be plastoquinone. Couples the redox reaction to proton translocation, and thus conserves the redox energy in a proton gradient. The polypeptide is NAD(P)H-quinone oxidoreductase subunit I (Parasynechococcus marenigrum (strain WH8102)).